A 199-amino-acid chain; its full sequence is Pyridoxine/pyridoxamine 5'-phosphate oxidase (199 aa).

FMN-binding positions include 44–49 (RTVLLK), 59–60 (YS), K66, and Q91. Position 49 (K49) interacts with substrate. Substrate is bound by residues Y109, R113, and S117. Residues 126 to 127 (QS) and W171 each bind FMN. Residue 177 to 179 (RLH) participates in substrate binding. Residue R181 participates in FMN binding.

It belongs to the pyridoxamine 5'-phosphate oxidase family. In terms of assembly, homodimer. The cofactor is FMN.

It carries out the reaction pyridoxamine 5'-phosphate + O2 + H2O = pyridoxal 5'-phosphate + H2O2 + NH4(+). It catalyses the reaction pyridoxine 5'-phosphate + O2 = pyridoxal 5'-phosphate + H2O2. The protein operates within cofactor metabolism; pyridoxal 5'-phosphate salvage; pyridoxal 5'-phosphate from pyridoxamine 5'-phosphate: step 1/1. It functions in the pathway cofactor metabolism; pyridoxal 5'-phosphate salvage; pyridoxal 5'-phosphate from pyridoxine 5'-phosphate: step 1/1. Functionally, catalyzes the oxidation of either pyridoxine 5'-phosphate (PNP) or pyridoxamine 5'-phosphate (PMP) into pyridoxal 5'-phosphate (PLP). The sequence is that of Pyridoxine/pyridoxamine 5'-phosphate oxidase from Xanthomonas oryzae pv. oryzae (strain KACC10331 / KXO85).